The primary structure comprises 70 residues: DNA-directed RNA polymerase subunit omega (70 aa).

This sequence belongs to the RNA polymerase subunit omega family. In terms of assembly, the RNAP catalytic core consists of 2 alpha, 1 beta, 1 beta' and 1 omega subunit. When a sigma factor is associated with the core the holoenzyme is formed, which can initiate transcription.

The catalysed reaction is RNA(n) + a ribonucleoside 5'-triphosphate = RNA(n+1) + diphosphate. Functionally, promotes RNA polymerase assembly. Latches the N- and C-terminal regions of the beta' subunit thereby facilitating its interaction with the beta and alpha subunits. In Staphylococcus epidermidis (strain ATCC 12228 / FDA PCI 1200), this protein is DNA-directed RNA polymerase subunit omega.